Here is a 360-residue protein sequence, read N- to C-terminus: UDP-N-acetylglucosamine--N-acetylmuramyl-(pentapeptide) pyrophosphoryl-undecaprenol N-acetylglucosamine transferase (360 aa).

UDP-N-acetyl-alpha-D-glucosamine contacts are provided by Ser-198 and Gln-289.

It belongs to the glycosyltransferase 28 family. MurG subfamily.

It localises to the cell membrane. It catalyses the reaction Mur2Ac(oyl-L-Ala-gamma-D-Glu-L-Lys-D-Ala-D-Ala)-di-trans,octa-cis-undecaprenyl diphosphate + UDP-N-acetyl-alpha-D-glucosamine = beta-D-GlcNAc-(1-&gt;4)-Mur2Ac(oyl-L-Ala-gamma-D-Glu-L-Lys-D-Ala-D-Ala)-di-trans,octa-cis-undecaprenyl diphosphate + UDP + H(+). The protein operates within cell wall biogenesis; peptidoglycan biosynthesis. Functionally, cell wall formation. Catalyzes the transfer of a GlcNAc subunit on undecaprenyl-pyrophosphoryl-MurNAc-pentapeptide (lipid intermediate I) to form undecaprenyl-pyrophosphoryl-MurNAc-(pentapeptide)GlcNAc (lipid intermediate II). The sequence is that of UDP-N-acetylglucosamine--N-acetylmuramyl-(pentapeptide) pyrophosphoryl-undecaprenol N-acetylglucosamine transferase from Streptococcus pyogenes serotype M3 (strain SSI-1).